Here is a 335-residue protein sequence, read N- to C-terminus: Ficolin-1 (335 aa).

The first 17 residues, 1 to 17 (MWWPMLWAFPVLLCLCS), serve as a signal peptide directing secretion. The disordered stretch occupies residues 47–114 (SCPSFPGPPG…TASPLGQKEL (68 aa)). One can recognise a Collagen-like domain in the interval 50–88 (SFPGPPGPKGEPGSPAGRGERGLQGSPGKMGPPGSKGEP). Residues 75–88 (SPGKMGPPGSKGEP) are compositionally biased toward low complexity. The Fibrinogen C-terminal domain occupies 117–335 (ALCRRGPRSC…KVAEMKIRAS (219 aa)). Disulfide bonds link Cys-119–Cys-147 and Cys-126–Cys-154. Residues 123-162 (PRSCKDLLTRGIFLTGWYTIYLPDCRPLTVLCDMDVDGGG) are a domain; contributes to trimerization. Residues 163 to 251 (WTVFQRRVDG…LTLGQFLEGT (89 aa)) are b domain; contributes to trimerization. Asp-270 serves as a coordination point for Ca(2+). A glycan (N-linked (GlcNAc...) asparagine) is linked at Asn-271. Asp-272 serves as a coordination point for Ca(2+). Cys-279 and Cys-292 are joined by a disulfide. Position 291 to 293 (291 to 293 (DCH)) interacts with a carbohydrate. The segment at 326–335 (KVAEMKIRAS) is p domain.

This sequence belongs to the ficolin lectin family. As to quaternary structure, homotrimer. Interacts with elastin/ELN. Interacts (via Fibrinogen C-terminal domain) with FFAR2. Interacts with CRP; may regulate monocyte activation by FCN1.

The protein resides in the secreted. It is found in the cell membrane. Functionally, extracellular lectin functioning as a pattern-recognition receptor in innate immunity. Binds the sugar moieties of pathogen-associated molecular patterns (PAMPs) displayed on microbes and activates the lectin pathway of the complement system. May also activate monocytes through a G protein-coupled receptor, FFAR2, inducing the secretion of interleukin-8/IL-8. Binds preferentially to 9-O-acetylated 2-6-linked sialic acid derivatives and to various glycans containing sialic acid engaged in a 2-3 linkage. This chain is Ficolin-1 (Fcn1), found in Rattus norvegicus (Rat).